Reading from the N-terminus, the 507-residue chain is Cyclic GMP-AMP synthase (507 aa).

The interval 1-146 (MEDPRRRTTA…PRAPRGSRKE (146 aa)) is DNA-binding. The segment at 1-151 (MEDPRRRTTA…GSRKEPDKLK (151 aa)) is disordered. Over residues 7–18 (RTTAPRAKKPSA) the composition is skewed to basic residues. Basic and acidic residues predominate over residues 44 to 57 (RRAERDGDTTEKPR). The segment at 48–59 (RDGDTTEKPRAP) is required for association with the cell membrane. Thr-52 is subject to Phosphothreonine. Residues 119-132 (RKVVRGPSHRRGAR) form a required for activation upon DNA viral infection region. The span at 121–131 (VVRGPSHRRGA) shows a compositional bias: basic residues. Residues 154 to 159 (LDKLRL) carry the Nuclear export signal motif. Residue Lys-156 is modified to N6-lactoyllysine. Residues 158 to 201 (RLKRKDISEAAETVNKVVERLLRRMQKRESEFKGVEQLNTGSYY) form a DNA-binding region. Residue Glu-176 is modified to PolyADP-ribosyl glutamic acid. GTP is bound at residue Thr-197. An ATP-binding site is contributed by Ser-199. Residue Ser-199 is modified to Phosphoserine. Tyr-201 is modified (phosphotyrosine). Glu-211 and Asp-213 together coordinate Mg(2+). Asp-213 contributes to the 2',3'-cGAMP binding site. Lys-217 is covalently cross-linked (Glycyl lysine isopeptide (Lys-Gly) (interchain with G-Cter in SUMO)). Lys-271 is covalently cross-linked (Glycyl lysine isopeptide (Lys-Gly) (interchain with G-Cter in ubiquitin)). Glu-272 is subject to 5-glutamyl polyglutamate. A Nuclear localization signal motif is present at residues 281-291 (DVSVEKEKPGS). Gly-290 is a binding site for 2',3'-cGAMP. Ser-291 bears the Phosphoserine; by CDK1 and PKB mark. Glu-302 carries the post-translational modification 5-glutamyl glutamate. Asp-307 is a GTP binding site. Asp-307 serves as a coordination point for Mg(2+). Asp-307 contacts 2',3'-cGAMP. The interval 329–370 (QGWLGTKVRTNLRREPFYLVPKNAKDGNSFQGETWRLSFSHT) is interaction with collided ribosomes. A Glycyl lysine isopeptide (Lys-Gly) (interchain with G-Cter in SUMO); alternate cross-link involves residue Lys-335. A Glycyl lysine isopeptide (Lys-Gly) (interchain with G-Cter in ubiquitin); alternate cross-link involves residue Lys-335. 2',3'-cGAMP-binding positions include Lys-350 and 364–366 (RLS). Position 364 to 371 (364 to 371 (RLSFSHTE)) interacts with GTP. Glu-371 contributes to the ATP binding site. A Glycyl lysine isopeptide (Lys-Gly) (interchain with G-Cter in SUMO); alternate cross-link involves residue Lys-372. Lys-372 is covalently cross-linked (Glycyl lysine isopeptide (Lys-Gly) (interchain with G-Cter in ubiquitin); alternate). An N6-acetyllysine modification is found at Lys-372. A DNA-binding region spans residues 372 to 395 (KYILNNHGIEKTCCESSGAKCCRK). A Zn(2+)-binding site is contributed by His-378. A Glycyl lysine isopeptide (Lys-Gly) (interchain with G-Cter in SUMO) cross-link involves residue Lys-382. Lys-382 bears the N6-acetyllysine mark. Zn(2+)-binding residues include Cys-384, Cys-385, and Cys-392. 2 S-palmitoyl cysteine lipidation sites follow: Cys-392 and Cys-393. Residues Lys-399, Lys-402, Lys-409, and Lys-410 each participate in a glycyl lysine isopeptide (Lys-Gly) (interchain with G-Cter in ubiquitin) cross-link. Lys-402 provides a ligand contact to ATP. Lys-402 carries the post-translational modification N6-acetyllysine. A Phosphoserine modification is found at Ser-420. 420 to 424 (SYHVK) contacts ATP. A lipid anchor (S-palmitoyl cysteine) is attached at Cys-459. Lys-464 participates in a covalent cross-link: Glycyl lysine isopeptide (Lys-Gly) (interchain with G-Cter in SUMO); alternate. Lys-464 is covalently cross-linked (Glycyl lysine isopeptide (Lys-Gly) (interchain with G-Cter in ubiquitin); alternate). At Lys-491 the chain carries N6-methyllysine.

The protein belongs to the mab-21 family. Monomer in the absence of DNA. Homodimer in presence of dsDNA: forms a 2:2 dimer with two enzymes binding to two DNA molecules. Interacts with nucleosomes; interaction is mainly mediated via histones H2A and H2B and inactivates the nucleotidyltransferase activity by blocking DNA-binding and subsequent activation. Interacts with PQBP1 (via WW domain). Interacts with TRIM14; this interaction recruits USP14, leading to deubiquitinate and stabilize CGAS and promote type I interferon production. Interacts with ZCCHC3; promoting sensing of dsDNA by CGAS. Interacts (when not monomethylated) with (poly-ADP-ribosylated) PARP1; interaction takes place in the nucleus and prevents the formation of the PARP1-TIMELESS complex. Interacts (when monomethylated) with SGF29; interaction with SGF29 prevents interaction with PARP1. Interacts with PCBP2; preventing the formation of liquid-like droplets in which CGAS is activated. Interacts with Irgm1; promoting CGAS degradation. Interacts with DDX41. Mg(2+) serves as cofactor. Requires Mn(2+) as cofactor. It depends on Zn(2+) as a cofactor. Post-translationally, the N-terminal disordered part (1-146) is phosphorylated by AURKB during the G2-M transition, blocking CGAS liquid phase separation and preventing activation. Phosphorylation at Tyr-201 by BLK promotes cytosolic retention. Localizes into the nucleus following dephosphorylation at Tyr-201. Phosphorylation at Ser-420 activates the nucleotidyltransferase activity. Dephosphorylation at Ser-420 by PPP6C impairs its ability to bind GTP, thereby inactivating it. Phosphorylation at Thr-52 and Ser-199 by PRKDC inhibits its cyclic GMP-AMP synthase activity by impairing homodimerization and activation. Phosphorylation at Ser-291 by AKT (AKT1, AKT2 or AKT3) suppresses the nucleotidyltransferase activity. Phosphorylation at Ser-291 by CDK1 during mitosis leads to its inhibition, thereby preventing CGAS activation by self-DNA during mitosis. Dephosphorylated at Ser-291 by protein phosphatase PP1 upon mitotic exit. In terms of processing, ubiquitinated at Lys-402 via 'Lys-48'-linked polyubiquitin chains, leading to its SQSTM1-mediated autophagic degradation. Interaction with TRIM14 promotes recruitment of USP14, leading to deubiquitinate Lys-402 and stabilize CGAS. Ubiquitinated at Lys-372 by RNF185 via 'Lys-27'-linked polyubiquitination, promoting CGAS cyclic GMP-AMP synthase activity. Monoubiquitination at Lys-335 by TRIM56 promotes oligomerization and subsequent activation. Monoubiquitination by TRIM41 promotes CGAS activation. Ubiquitination at Lys-271 and Lys-464 via 'Lys-48'-linked polyubiquitination promotes its degradation. Deubiquitination at Lys-271 by USP29 promotes its stabilization. Deubiquitinated by USP27X, promoting its stabilization. Ubiquitinated at Lys-399 via 'Lys-63'-linked polyubiquitin chains by MARCHF8, leading to the inhibition of its DNA binding ability. In cycling cells, nucleosome-bound CGAS is ubiquitinated at Lys-409 and Lys-410 via 'Lys-48'-linked polyubiquitin chains by the ECS(SPSB3) complex, leading to its degradation: ubiquitination and degradation of nuclear CGAS during G1 and G2 phases is required to promote low intranuclear CGAS abundance before the next mitotic cycle. Sumoylated at Lys-217 and Lys-464 by TRIM38 in uninfected cells and during the early phase of viral infection, promoting its stability by preventing ubiquitination at Lys-271 and Lys-464, and subsequent degradation. Desumoylated by SENP2 during the late phase of viral infection. Sumoylation at Lys-335, Lys-372 and Lys-382 prevents DNA-binding, oligomerization and nucleotidyltransferase activity. Desumoylation at Lys-335, Lys-372 and Lys-382 by SENP7 relieves inhibition and activates CGAS. Post-translationally, polyglutamylated by TTLL6 at Glu-272, leading to impair DNA-binding activity. Monoglutamylated at Glu-302 by TTLL4, leading to impair the nucleotidyltransferase activity. Deglutamylated by AGBL5/CCP5 and AGBL6/CCP6. In terms of processing, acetylation at Lys-372, Lys-382 and Lys-402 inhibits the cyclic GMP-AMP synthase activity. Deacetylated upon cytosolic DNA challenge such as viral infections. Acetylation by KAT5 increases the cyclic GMP-AMP synthase activity by promoting DNA-binding and subsequent activation. Proteolytically cleaved by apoptotic caspases during apoptosis, leading to its inactivation. The damage of the nucleus and the mitochondria during apoptosis leads to leakage of nuclear and mitochondrial DNA, which activate CGAS: cleavage and inactivation during apoptosis in required to prevent cytokine overproduction. Cleaved by CASP7 and CASP3 during virus-induced apoptosis, thereby inactivating it and preventing cytokine overproduction. Cleaved by CASP1 upon DNA virus infection; the cleavage impairs cGAMP production. Also cleaved by the pyroptotic CASP4 during non-canonical inflammasome activation; does not cut at the same sites than CASP1. Post-translationally, degraded via selective autophagy following interaction with Irgm1. Irgm1 promotes CGAS recruitment to autophagosome membranes, promoting its SQSTM1/p62-dependent autophagic degradation. In terms of processing, poly-ADP-ribosylation at Glu-176 by PARP1 impairs DNA-binding, thereby preventing the cyclic GMP-AMP synthase activity. Palmitoylation at Cys-459 by ZDHHC18 impairs DNA-binding, thereby preventing the cyclic GMP-AMP synthase activity. Palmitoylation at Cys-392 and Cys-393 by ZDHHC9 promotes homodimerization and cyclic GMP-AMP synthase activity. Depalmitoylation at Cys-392 and Cys-393 by LYPLAL1 impairs homodimerization and cyclic GMP-AMP synthase activity. Post-translationally, monomethylated at Lys-491 by SETD7. Monomethylation promotes interaction with SGF29, preventing interaction between PARP1 nad SGF29. Demethylation by RIOX1 promotes interaction with PARP1, followed by PARP1 inactivation. In terms of processing, lactylation by AARS2 prevents ability to undergo liquid-liquid phase separation (LLPS), thereby inhibiting CGAS activation.

The protein resides in the nucleus. Its subcellular location is the chromosome. The protein localises to the cell membrane. It is found in the cytoplasm. It localises to the cytosol. It catalyses the reaction GTP + ATP = 2',3'-cGAMP + 2 diphosphate. It carries out the reaction GTP + ATP = pppGp(2'-5')A + diphosphate. The enzyme catalyses pppGp(2'-5')A = 2',3'-cGAMP + diphosphate. With respect to regulation, the enzyme activity is strongly increased by double-stranded DNA (dsDNA), but not by single-stranded DNA or RNA. DNA-binding induces the formation of liquid-like droplets in which CGAS is activated. Liquid-like droplets also create a selective environment that restricts entry of negative regulators, such as TREX1 or BANF1/BAF, allowing sensing of DNA. A number of mechanisms exist to restrict its activity toward self-DNA. The nucleotidyltransferase activity is inhibited in the nucleus via its association with nucleosomes: interacts with the acidic patch of histones H2A and H2B, thereby blocking DNA-binding and subsequent activation. CGAS is also inactive when associated with mitotic chromatin. Chromatin-bound CGAS cannot be activated by exogenous DNA in mitotic cells: phosphorylation of the N-terminal disordered part by AURKB during the G2-M transition blocks CGAS liquid phase separation and activation. Activity toward self-DNA is inhibited by BANF1/BAF upon acute loss of nuclear membrane integrity: BANF1/BAF acts by outcompeting CGAS for DNA-binding, thereby preventing CGAS activation. DNA-induced activation at micronuclei is also limited by TREX1, which degrades micronuclear DNA upon nuclear envelope rupture, thereby preventing CGAS activation. CGAS can be released from nucleosomes and activated by MRE11 component of the MRN complex, which displaces CGAS from acidic-patch-mediated sequestration. Acetylation at Lys-372, Lys-382 and Lys-402 inhibits the cyclic GMP-AMP synthase activity. Acetylation by KAT5 increases the cyclic GMP-AMP synthase activity by promoting DNA-binding and subsequent activation. Phosphorylation at Ser-291 suppresses the nucleotidyltransferase activity. Phosphorylation at Ser-420 promotes the cyclic GMP-AMP synthase activity. Phosphorylation at Thr-52 and Ser-199 inhibits its cyclic GMP-AMP synthase activity. Ubiquitination at Lys-372 via 'Lys-27'-linked polyubiquitination enhances the cyclic GMP-AMP synthase activity. Monoubiquitination at Lys-335 promotes oligomerization and subsequent activation. Sumoylation at Lys-335, Lys-372 and Lys-382 prevents DNA-binding, oligomerization and nucleotidyltransferase activity. The enzyme activity is impaired by the cleavage by CASP1. In addition to DNA, also activated by collided ribosomes upon translation stress: specifically binds collided ribosomes, promoting its activation and triggering type-I interferon production. In hematopoietic stem cells, binding to circular RNA cia-cGAS inhibits the cyclic GMP-AMP synthase activity. Strongly inhibited by compound RU.521, which is specific for mouse protein. Functionally, nucleotidyltransferase that catalyzes the formation of cyclic GMP-AMP (2',3'-cGAMP) from ATP and GTP and plays a key role in innate immunity. Catalysis involves both the formation of a 2',5' phosphodiester linkage at the GpA step and the formation of a 3',5' phosphodiester linkage at the ApG step, producing c[G(2',5')pA(3',5')p]. Acts as a key DNA sensor: directly binds double-stranded DNA (dsDNA), inducing the formation of liquid-like droplets in which CGAS is activated, leading to synthesis of 2',3'-cGAMP, a second messenger that binds to and activates STING1, thereby triggering type-I interferon production. Preferentially binds long dsDNA (around 45 bp) and forms ladder-like networks that function cooperatively to stabilize individual cGAS-dsDNA complexes. Acts as a key foreign DNA sensor, the presence of double-stranded DNA (dsDNA) in the cytoplasm being a danger signal that triggers the immune responses. Has antiviral activity by sensing the presence of dsDNA from DNA viruses in the cytoplasm. Also acts as an innate immune sensor of infection by retroviruses by detecting the presence of reverse-transcribed DNA in the cytosol. Detection of retroviral reverse-transcribed DNA in the cytosol may be indirect and be mediated via interaction with PQBP1, which directly binds reverse-transcribed retroviral DNA. Also detects the presence of DNA from bacteria. 2',3'-cGAMP can be transferred from producing cells to neighboring cells through gap junctions, leading to promote STING1 activation and convey immune response to connecting cells. 2',3'-cGAMP can also be transferred between cells by virtue of packaging within viral particles contributing to IFN-induction in newly infected cells in a cGAS-independent but STING1-dependent manner. Also senses the presence of neutrophil extracellular traps (NETs) that are translocated to the cytosol following phagocytosis, leading to synthesis of 2',3'-cGAMP. In addition to foreign DNA, can also be activated by endogenous nuclear or mitochondrial DNA. When self-DNA leaks into the cytosol during cellular stress (such as mitochondrial stress, DNA damage, mitotic arrest or senescence), or is present in form of cytosolic micronuclei, CGAS is activated leading to a state of sterile inflammation. Acts as a regulator of cellular senescence by binding to cytosolic chromatin fragments that are present in senescent cells, leading to trigger type-I interferon production via STING1 and promote cellular senescence. Also involved in the inflammatory response to genome instability and double-stranded DNA breaks: acts by localizing to micronuclei arising from genome instability. Micronuclei, which as frequently found in cancer cells, consist of chromatin surrounded by its own nuclear membrane: following breakdown of the micronuclear envelope, a process associated with chromothripsis, CGAS binds self-DNA exposed to the cytosol, leading to 2',3'-cGAMP synthesis and subsequent activation of STING1 and type-I interferon production. In a healthy cell, CGAS is however kept inactive even in cellular events that directly expose it to self-DNA, such as mitosis, when cGAS associates with chromatin directly after nuclear envelope breakdown or remains in the form of postmitotic persistent nuclear cGAS pools bound to chromatin. Nuclear CGAS is inactivated by chromatin via direct interaction with nucleosomes, which block CGAS from DNA binding and thus prevent CGAS-induced autoimmunity. Also acts as a suppressor of DNA repair in response to DNA damage: inhibits homologous recombination repair by interacting with PARP1, the CGAS-PARP1 interaction leading to impede the formation of the PARP1-TIMELESS complex. In addition to DNA, also sense translation stress: in response to translation stress, translocates to the cytosol and associates with collided ribosomes, promoting its activation and triggering type-I interferon production. The sequence is that of Cyclic GMP-AMP synthase from Mus musculus (Mouse).